The sequence spans 351 residues: MASTGSQASDIDKILGFFSDGAPPTKKPRKLLPSLKTKKPRELVLVIGTGISAAVAPQVPALKSWKGLIQALLDAAIDFDLLEDEESKKFQKCLHEDKNLVHVAHDLIQKLSPRTSNVRSTFFKDCLYEVFDDLESKMEDSGKQLLQSVLHLMENGALVLTTNFDNLLELYAADQGKQLESLDLTDEKKVLEWAQEKRKLSVLHIHGVYTNPSGIVLHPAGYQNVLRNTEVMREIQKLYENKSFLFLGCGWTVDDTTFQALFLEAVKHKSDLEHFMLVRRGDVDEFKKLRENMLDKGIKVISYGNDYADLPEYFKRLTCEISTRGRSAGIVREGQLNGSSTAHSEIRDHST.

Ala-2 bears the N-acetylalanine mark. Ser-9 bears the Phosphoserine mark.

This sequence belongs to the FAM118 family.

It localises to the nucleus. It is found in the cajal body. Its function is as follows. May play a role in Cajal bodies formation. The protein is Protein FAM118B (FAM118B) of Bos taurus (Bovine).